Consider the following 362-residue polypeptide: Phosphoserine aminotransferase (362 aa).

L-glutamate is bound at residue Arg-42. Residues Ala-76 to Arg-77, Trp-102, Thr-153, Asp-174, and Gln-197 each bind pyridoxal 5'-phosphate. At Lys-198 the chain carries N6-(pyridoxal phosphate)lysine. Residue Asn-239 to Thr-240 coordinates pyridoxal 5'-phosphate.

Belongs to the class-V pyridoxal-phosphate-dependent aminotransferase family. SerC subfamily. As to quaternary structure, homodimer. Pyridoxal 5'-phosphate is required as a cofactor.

It localises to the cytoplasm. It carries out the reaction O-phospho-L-serine + 2-oxoglutarate = 3-phosphooxypyruvate + L-glutamate. The enzyme catalyses 4-(phosphooxy)-L-threonine + 2-oxoglutarate = (R)-3-hydroxy-2-oxo-4-phosphooxybutanoate + L-glutamate. Its pathway is amino-acid biosynthesis; L-serine biosynthesis; L-serine from 3-phospho-D-glycerate: step 2/3. It functions in the pathway cofactor biosynthesis; pyridoxine 5'-phosphate biosynthesis; pyridoxine 5'-phosphate from D-erythrose 4-phosphate: step 3/5. Functionally, catalyzes the reversible conversion of 3-phosphohydroxypyruvate to phosphoserine and of 3-hydroxy-2-oxo-4-phosphonooxybutanoate to phosphohydroxythreonine. The polypeptide is Phosphoserine aminotransferase (Proteus mirabilis (strain HI4320)).